The sequence spans 688 residues: Probable transcription factor gsfR1 (688 aa).

A compositionally biased stretch (acidic residues) spans 1 to 16 (MSDGPETAEGDTDDAV). A disordered region spans residues 1-95 (MSDGPETAEG…TPVSSRGSIA (95 aa)). A compositionally biased stretch (polar residues) spans 24–36 (RVASESSARSQPR). Residues 58–75 (EHSKEKNVSRRLPTEKTP) are compositionally biased toward basic and acidic residues.

The protein resides in the nucleus. In terms of biological role, probable transcription factor that regulates expression of the gene cluster that mediates the biosynthesis of Griseofulvin, an important antifungal drug that has been in use for a long time for treating dermatophyte infections. This is Probable transcription factor gsfR1 from Penicillium aethiopicum.